The primary structure comprises 109 residues: T cell receptor alpha variable 26-1 (109 aa).

Residues 1 to 19 form the signal peptide; the sequence is MRLVARVTVFLTFGTIIDA. One can recognise an Ig-like domain in the interval 20-109; the sequence is KTTQPTSMDC…TAVYYCIVRV (90 aa). Cysteines 39 and 105 form a disulfide. N-linked (GlcNAc...) asparagine glycans are attached at residues N40 and N71.

Alpha-beta TR is a heterodimer composed of an alpha and beta chain; disulfide-linked. The alpha-beta TR is associated with the transmembrane signaling CD3 coreceptor proteins to form the TR-CD3 (TcR or TCR). The assembly of alpha-beta TR heterodimers with CD3 occurs in the endoplasmic reticulum where a single alpha-beta TR heterodimer associates with one CD3D-CD3E heterodimer, one CD3G-CD3E heterodimer and one CD247 homodimer forming a stable octameric structure. CD3D-CD3E and CD3G-CD3E heterodimers preferentially associate with TR alpha and TR beta chains, respectively. The association of the CD247 homodimer is the last step of TcR assembly in the endoplasmic reticulum and is required for transport to the cell surface.

Its subcellular location is the cell membrane. V region of the variable domain of T cell receptor (TR) alpha chain that participates in the antigen recognition. Alpha-beta T cell receptors are antigen specific receptors which are essential to the immune response and are present on the cell surface of T lymphocytes. Recognize peptide-major histocompatibility (MH) (pMH) complexes that are displayed by antigen presenting cells (APC), a prerequisite for efficient T cell adaptive immunity against pathogens. Binding of alpha-beta TR to pMH complex initiates TR-CD3 clustering on the cell surface and intracellular activation of LCK that phosphorylates the ITAM motifs of CD3G, CD3D, CD3E and CD247 enabling the recruitment of ZAP70. In turn ZAP70 phosphorylates LAT, which recruits numerous signaling molecules to form the LAT signalosome. The LAT signalosome propagates signal branching to three major signaling pathways, the calcium, the mitogen-activated protein kinase (MAPK) kinase and the nuclear factor NF-kappa-B (NF-kB) pathways, leading to the mobilization of transcription factors that are critical for gene expression and essential for T cell growth and differentiation. The T cell repertoire is generated in the thymus, by V-(D)-J rearrangement. This repertoire is then shaped by intrathymic selection events to generate a peripheral T cell pool of self-MH restricted, non-autoaggressive T cells. Post-thymic interaction of alpha-beta TR with the pMH complexes shapes TR structural and functional avidity. This is T cell receptor alpha variable 26-1 from Homo sapiens (Human).